The chain runs to 192 residues: uncharacterized protein (192 aa).

In terms of domain architecture, B12-binding spans 72–192; that stretch reads GATVLLIVPP…SLVISEFSLV (121 aa).

This is an uncharacterized protein from Rhodobacter capsulatus (Rhodopseudomonas capsulata).